Here is a 333-residue protein sequence, read N- to C-terminus: Autoinducer 2 import system permease protein LsrD (333 aa).

The next 10 membrane-spanning stretches (helical) occupy residues 7–27 (YGWE…FGLS), 45–65 (ICIG…GIDI), 67–87 (FGST…AGVP), 90–110 (VAIP…AGLI), 118–138 (LVIT…LSGL), 162–182 (LFGL…FWLL), 212–232 (TLCM…ILLV), 240–260 (SDLG…GGAN), 261–281 (IYGG…VGYL), and 288–308 (IGTP…LVVV).

It belongs to the binding-protein-dependent transport system permease family. AraH/RbsC subfamily. The complex is composed of two ATP-binding proteins (LsrA), two transmembrane proteins (LsrC and LsrD) and a solute-binding protein (LsrB).

The protein localises to the cell inner membrane. Its function is as follows. Part of the ABC transporter complex LsrABCD involved in autoinducer 2 (AI-2) import. Probably responsible for the translocation of the substrate across the membrane. The chain is Autoinducer 2 import system permease protein LsrD (lsrD) from Yersinia pestis bv. Antiqua (strain Antiqua).